The following is a 348-amino-acid chain: Heptaprenyl diphosphate synthase component 2 (348 aa).

Lys73, Arg76, and His105 together coordinate isopentenyl diphosphate. 2 residues coordinate Mg(2+): Asp112 and Asp116. Arg121 serves as a coordination point for all-trans-hexaprenyl diphosphate. Arg122 contributes to the isopentenyl diphosphate binding site. Residues Lys198, Thr199, and Gln236 each coordinate all-trans-hexaprenyl diphosphate.

The protein belongs to the FPP/GGPP synthase family. Heterodimer of component I and II. The cofactor is Mg(2+).

The enzyme catalyses 4 isopentenyl diphosphate + (2E,6E)-farnesyl diphosphate = all-trans-heptaprenyl diphosphate + 4 diphosphate. In terms of biological role, supplies heptaprenyl diphosphate, the precursor for the side chain of the isoprenoid quinone menaquinone-7 (MQ-7). This Bacillus subtilis (strain 168) protein is Heptaprenyl diphosphate synthase component 2 (hepT).